A 312-amino-acid polypeptide reads, in one-letter code: Coproporphyrin III ferrochelatase (312 aa).

Residues Tyr13, Arg30, 46 to 47, Ser54, and Tyr125 each bind Fe-coproporphyrin III; that span reads RY. Residues His183 and Glu264 each coordinate Fe(2+).

The protein belongs to the ferrochelatase family.

Its subcellular location is the cytoplasm. It carries out the reaction Fe-coproporphyrin III + 2 H(+) = coproporphyrin III + Fe(2+). Its pathway is porphyrin-containing compound metabolism; protoheme biosynthesis. Its function is as follows. Involved in coproporphyrin-dependent heme b biosynthesis. Catalyzes the insertion of ferrous iron into coproporphyrin III to form Fe-coproporphyrin III. The chain is Coproporphyrin III ferrochelatase from Bacillus pumilus (strain SAFR-032).